The primary structure comprises 495 residues: MFKKIMKGANRKASKAEANDSSMYGFDPPGRSGPGSNMIVNHASRGSLVPSSPNSMAAATTQPPPMYSVEPLPLFRDVSVSERQSLFLRKLQICCFQFDFTDTLKNAREKEIKRQTLLELVDFIQSGAGKLTEVCQEEMVKMISVNIFRCLPPASHENTGQEPADLEEEEPYLEPSWPHLQLIYELLLRYIVPSDTDTKVAKRYIDHSFVLRLLELFETEDPREREYLKTILHRIYGKFMVHRPFIRKAMNHIFYRFIYETERHSGIGELLEILGSIINGFALPMKEEHKLFLIRALIPLHKPKPIAMYHQQLSYCIVQFVEKDYKLADTVIRGLLKFWPVTNCTKEVLFLGELEEVLEATQTVEFQRCMVPLFQQIARCLSSSNFQVAERALFLWNNEHVVGLIAQNRGVILPIIFASLEKNIESHWNQAVHGLSANIKRMFMEMDPELFEECQQQYEEKQAKSKQVEEQRQNRWRRLDEAVEEREREDPMITS.

Residues 1-13 (MFKKIMKGANRKA) are compositionally biased toward basic residues. 2 disordered regions span residues 1 to 61 (MFKK…AATT) and 462 to 495 (QAKS…MITS). Residues 49–61 (VPSSPNSMAAATT) are compositionally biased toward polar residues.

It belongs to the phosphatase 2A regulatory subunit B56 family. As to quaternary structure, PP2A consists of a common heteromeric enzyme, composed of a catalytic subunit (subunits C), a constant regulatory subunit (subunit A), and a variety of regulatory subunits such as subunits B (the R2/B/PR55/B55, R3/B''/PR72/PR130/PR59 and R5/B'/B56 families). Interacts with BZR1. Interacts with BRI1. Interacts with SRK2E/OST1. In terms of tissue distribution, expressed ubiquitously, higher levels in leaves.

Its subcellular location is the nucleus. The protein localises to the cytoplasm. Functionally, the B regulatory subunit may modulate substrate selectivity and catalytic activity, and may also direct the localization of the catalytic enzyme to a particular subcellular compartment. Required for the formation of the PP2A holoenzyme that positively regulates brassinosteroid signaling by dephosphorylating and activating BZR1. The sequence is that of Serine/threonine protein phosphatase 2A 57 kDa regulatory subunit B' alpha isoform (B'ALPHA) from Arabidopsis thaliana (Mouse-ear cress).